Here is a 297-residue protein sequence, read N- to C-terminus: Nucleotide-binding protein BMA10229_A1510 (297 aa).

An ATP-binding site is contributed by 8 to 15; it reads GISGSGKS. GTP is bound at residue 57 to 60; it reads DARS.

It belongs to the RapZ-like family.

In terms of biological role, displays ATPase and GTPase activities. This is Nucleotide-binding protein BMA10229_A1510 from Burkholderia mallei (strain NCTC 10229).